A 226-amino-acid chain; its full sequence is DnaJ homolog subfamily C member 30, mitochondrial (226 aa).

The N-terminal 38 residues, 1–38 (MAAMRWRWWQRLLPWRLLQARGFPQNSAPSLGLGARTY), are a transit peptide targeting the mitochondrion. Residues 49–114 (ALYDLLGVPS…TLRRKYDRGL (66 aa)) form the J domain. The segment at 116 to 157 (SDEDLRGPGVRPSRTPAPDPGSPRTPPPTSRTHDGSRASPGA) is disordered. Residues 130–144 (TPAPDPGSPRTPPPT) show a composition bias toward pro residues. The chain crosses the membrane as a helical span at residues 208–225 (DTAAIFLIFSIFIIIGFY).

In terms of assembly, associates with the ATP synthase complex. Interacts with MT-ATP6; interaction is direct. Interacts with ATP5MC2; interaction is direct. As to expression, expressed in brain, heart, kidney, liver, lung, spleen, stomach and testis. Highly expressed in the brain. In the neocortex, expressed in most, if not all, glutamatergic excitatory projection neurons (pyramidal) and many interneurons, with the strongest signal noticeably in large pyramidal neurons of layer 3C. Also present in pyramidal neurons of layer 3C PNs of the superior temporal cortex, as well as in pyramidal neurons (Betz cells) of the layer 5B primary motor cortex (at protein level).

Its subcellular location is the mitochondrion inner membrane. In terms of biological role, mitochondrial protein enriched in neurons that acts as a regulator of mitochondrial respiration. Associates with the ATP synthase complex and facilitates ATP synthesis. May be a chaperone protein involved in the turnover of the subunits of mitochondrial complex I N-module. It facilitates the degradation of N-module subunits damaged by oxidative stress, and contributes to complex I functional efficiency. This Homo sapiens (Human) protein is DnaJ homolog subfamily C member 30, mitochondrial.